The sequence spans 376 residues: Protein FhaE (376 aa).

The signal sequence occupies residues 1–37 (MSQIFADRRAAVPARVISFCGAALAVWAGLAVQPAMA).

The polypeptide is Protein FhaE (fhaE) (Bordetella pertussis (strain Tohama I / ATCC BAA-589 / NCTC 13251)).